The sequence spans 113 residues: Gas vesicle protein I2 (113 aa).

Positions 1-93 (MTPTNRHTHG…TVPEQPTHAT (93 aa)) are disordered. Residues 11–22 (QNAQHARRNAQQ) are compositionally biased toward low complexity. Over residues 52 to 63 (EQPTSDTTNPAA) the composition is skewed to polar residues. Over residues 69–81 (AQRTNAQNAARNA) the composition is skewed to low complexity. Residues 82–93 (HSTVPEQPTHAT) show a composition bias toward polar residues.

Belongs to the gas vesicle GvpI family. As to quaternary structure, gvpF to GvpM interact with each other in vitro, and may form multi-subunit complex(es). Interacts with GvpC and GvpO.

It localises to the gas vesicle. Its function is as follows. Proteins GvpF to GvpM might be involved in nucleating gas vesicle formation. A minor component of the gas vesicle. Gas vesicles are hollow, gas filled proteinaceous nanostructures found in several microbial planktonic microorganisms. They allow positioning of halobacteria at the optimal depth for growth in the poorly aerated, shallow brine pools of their habitat. Expression of 2 c-vac DNA fragments containing 2 divergently transcribed regions (gvpE-gvpF-gvpG-gvpH-gvpI-gvpJ-gvpK-gvpL-gvpM and gvpA-gvpC-gvpN-gvpO) allows H.volcanii to produce gas vesicles. The sequence is that of Gas vesicle protein I2 from Halobacterium salinarum (strain ATCC 700922 / JCM 11081 / NRC-1) (Halobacterium halobium).